The chain runs to 458 residues: Adenylosuccinate synthetase (458 aa).

GTP-binding positions include 17–23 (GDEGKGK) and 45–47 (GHT). Residue Asp-18 is the Proton acceptor of the active site. Residues Asp-18 and Gly-45 each contribute to the Mg(2+) site. Residues 18 to 21 (DEGK), 43 to 46 (NAGH), Thr-137, Arg-151, Gln-247, Thr-262, and Arg-330 each bind IMP. The active-site Proton donor is the His-46. A substrate-binding site is contributed by 326–332 (VTTGRSR). Residues Arg-332, 358–360 (KLD), and 440–442 (STS) each bind GTP.

It belongs to the adenylosuccinate synthetase family. As to quaternary structure, homodimer. The cofactor is Mg(2+).

The protein localises to the cytoplasm. It carries out the reaction IMP + L-aspartate + GTP = N(6)-(1,2-dicarboxyethyl)-AMP + GDP + phosphate + 2 H(+). It functions in the pathway purine metabolism; AMP biosynthesis via de novo pathway; AMP from IMP: step 1/2. Functionally, plays an important role in the de novo pathway of purine nucleotide biosynthesis. Catalyzes the first committed step in the biosynthesis of AMP from IMP. In Delftia acidovorans (strain DSM 14801 / SPH-1), this protein is Adenylosuccinate synthetase.